The following is a 218-amino-acid chain: PKHD-type hydroxylase IL0759 (218 aa).

Positions 76-170 (QVARVTINRY…RLAMIGWVQS (95 aa)) constitute a Fe2OG dioxygenase domain. Fe cation is bound by residues His94, Asp96, and His151. Residue Arg161 coordinates 2-oxoglutarate.

It depends on Fe(2+) as a cofactor. The cofactor is L-ascorbate.

The sequence is that of PKHD-type hydroxylase IL0759 from Idiomarina loihiensis (strain ATCC BAA-735 / DSM 15497 / L2-TR).